A 198-amino-acid chain; its full sequence is Type II secretion system protein J (198 aa).

A propeptide spans 1-7 (MIRRSSG) (leader sequence). At phenylalanine 8 the chain carries N-methylphenylalanine. Residues 8-28 (FTLVEMLLALAILAALSVAAV) form a helical membrane-spanning segment.

The protein belongs to the GSP J family. Type II secretion is composed of four main components: the outer membrane complex, the inner membrane complex, the cytoplasmic secretion ATPase and the periplasm-spanning pseudopilus. Interacts with core component PulG. Cleaved by prepilin peptidase. In terms of processing, methylated by prepilin peptidase at the amino group of the N-terminal phenylalanine once the leader sequence is cleaved by prepilin peptidase.

The protein localises to the cell inner membrane. Functionally, component of the type II secretion system required for the energy-dependent secretion of extracellular factors such as proteases and toxins from the periplasm. Part of the pseudopilus tip complex that is critical for the recognition and binding of secretion substrates. The protein is Type II secretion system protein J (pulJ) of Klebsiella pneumoniae.